We begin with the raw amino-acid sequence, 295 residues long: Ribosomal protein L11 methyltransferase (295 aa).

Residues Thr150, Gly171, Asp193, and Asn232 each coordinate S-adenosyl-L-methionine.

The protein belongs to the methyltransferase superfamily. PrmA family.

It localises to the cytoplasm. The enzyme catalyses L-lysyl-[protein] + 3 S-adenosyl-L-methionine = N(6),N(6),N(6)-trimethyl-L-lysyl-[protein] + 3 S-adenosyl-L-homocysteine + 3 H(+). Methylates ribosomal protein L11. The sequence is that of Ribosomal protein L11 methyltransferase from Neisseria meningitidis serogroup C / serotype 2a (strain ATCC 700532 / DSM 15464 / FAM18).